The primary structure comprises 196 residues: MYFDSWTCEALENLPDYFKHILDEVAQINLYKMKENRKHFRKNDYGFEQAMVTYLAEKFIRNIRNLPNNLELGIAETLTKTKLESNKQPDFSLVKKDDGTVIEVMEVKTIIDNNFSWLREDVCKLRELDEVQNKFLLSINLYISRSAYTQTIKRLSKFMENDKNNSLSILCHGLLYRSRHGVQNFQLTYYYYLFKI.

This is an uncharacterized protein from Aquifex aeolicus (strain VF5).